The chain runs to 120 residues: Large ribosomal subunit protein uL18 (120 aa).

Positions 1 to 22 (MITKTSKNAARQKRHARVRAKL) are disordered. Residues 10–20 (ARQKRHARVRA) are compositionally biased toward basic residues.

The protein belongs to the universal ribosomal protein uL18 family. In terms of assembly, part of the 50S ribosomal subunit; part of the 5S rRNA/L5/L18/L25 subcomplex. Contacts the 5S and 23S rRNAs.

Its function is as follows. This is one of the proteins that bind and probably mediate the attachment of the 5S RNA into the large ribosomal subunit, where it forms part of the central protuberance. The polypeptide is Large ribosomal subunit protein uL18 (Bacillus velezensis (strain DSM 23117 / BGSC 10A6 / LMG 26770 / FZB42) (Bacillus amyloliquefaciens subsp. plantarum)).